The following is a 473-amino-acid chain: MKSILDGLADTTFRTITTDLLYVGSNDIQYEDIKGDMASKLGYFPQKFPLTSFRGSPFQEKMTAGDNSPLVPAGDTTNITEFYNKSLSSFKENEENIQCGENFMDMECFMILNPSQQLAIAVLSLTLGTFTVLENLLVLCVILHSRSLRCRPSYHFIGSLAVADLLGSVIFVYSFVDFHVFHRKDSPNVFLFKLGGVTASFTASVGSLFLTAIDRYISIHRPLAYKRIVTRPKAVVAFCLMWTIAIVIAVLPLLGWNCKKLQSVCSDIFPLIDETYLMFWIGVTSVLLLFIVYAYMYILWKAHSHAVRMIQRGTQKSIIIHTSEDGKVQVTRPDQARMDIRLAKTLVLILVVLIICWGPLLAIMVYDVFGKMNKLIKTVFAFCSMLCLLNSTVNPIIYALRSKDLRHAFRSMFPSCEGTAQPLDNSMGDSDCLHKHANNTASMHRAAESCIKSTVKIAKVTMSVSTDTSAEAL.

The Extracellular portion of the chain corresponds to 1–117; that stretch reads MKSILDGLAD…CFMILNPSQQ (117 aa). Residues 2-23 form a required for mitochondrial localization region; sequence KSILDGLADTTFRTITTDLLYV. 2 N-linked (GlcNAc...) asparagine glycosylation sites follow: asparagine 78 and asparagine 84. The helical transmembrane segment at 118 to 143 threads the bilayer; it reads LAIAVLSLTLGTFTVLENLLVLCVIL. Residues 144 to 155 lie on the Cytoplasmic side of the membrane; that stretch reads HSRSLRCRPSYH. Residues 156–176 form a helical membrane-spanning segment; sequence FIGSLAVADLLGSVIFVYSFV. Residues 177 to 188 are Extracellular-facing; that stretch reads DFHVFHRKDSPN. The chain crosses the membrane as a helical span at residues 189-213; that stretch reads VFLFKLGGVTASFTASVGSLFLTAI. The Cytoplasmic portion of the chain corresponds to 214 to 233; sequence DRYISIHRPLAYKRIVTRPK. The chain crosses the membrane as a helical span at residues 234–256; that stretch reads AVVAFCLMWTIAIVIAVLPLLGW. Topologically, residues 257 to 274 are extracellular; sequence NCKKLQSVCSDIFPLIDE. Residues 275 to 300 form a helical membrane-spanning segment; sequence TYLMFWIGVTSVLLLFIVYAYMYILW. The Cytoplasmic segment spans residues 301 to 345; the sequence is KAHSHAVRMIQRGTQKSIIIHTSEDGKVQVTRPDQARMDIRLAKT. Residues 346-366 form a helical membrane-spanning segment; that stretch reads LVLILVVLIICWGPLLAIMVY. Topologically, residues 367–378 are extracellular; that stretch reads DVFGKMNKLIKT. A helical transmembrane segment spans residues 379–400; that stretch reads VFAFCSMLCLLNSTVNPIIYAL. The Cytoplasmic portion of the chain corresponds to 401–473; it reads RSKDLRHAFR…VSTDTSAEAL (73 aa). Cysteine 416 carries the S-palmitoyl cysteine lipid modification. Serine 426 and serine 430 each carry phosphoserine.

This sequence belongs to the G-protein coupled receptor 1 family. Interacts (via C-terminus) with CNRIP1. Associates with G protein alpha subunits, including G(i) alpha-1/GNAI1, G(i) alpha-3/GNAI3 and G(o)-alpha/GNAO1; palmitoylation is important for interaction with GNAI3 and GNAO1. Palmitoylation at Cys-416 is important for recruitment at both plasma membrane and lipid rafts and association with G protein alpha subunits. Expressed in the brain, in the striatum, medial septum, descending arm of the band of Broca, the amygdaloid nucleus, the hippocampus and cortex (at protein level). High levels in the lateral striatum. In rostral brain regions, high expression levels in the dorsal lateral striatum, while in the caudal brain regions, high levels are observed in the ventral lateral striatum. Expressed in monocytes/macrophages (at protein level). Expressed in striated muscles and in vascular smooth muscles cells (at protein level).

Its subcellular location is the cell membrane. The protein resides in the mitochondrion outer membrane. It localises to the cell projection. It is found in the axon. The protein localises to the presynapse. Hemopressin, a peptide derived from hemoglobin subunit alpha (HBA1 and/or HBA2), acts as an antagonist peptide: hemopressin-binding efficiently blocks cannabinoid receptor CNR1 and subsequent signaling. Functionally, G-protein coupled receptor for cannabinoids, including endocannabinoids (eCBs), such as N-arachidonoylethanolamide (also called anandamide or AEA) and 2-arachidonoylglycerol (2-AG). Mediates many cannabinoid-induced effects, acting, among others, on food intake, memory loss, gastrointestinal motility, catalepsy, ambulatory activity, anxiety, chronic pain. Signaling typically involves reduction in cyclic AMP. In the hypothalamus, may have a dual effect on mitochondrial respiration depending upon the agonist dose and possibly upon the cell type. Increases respiration at low doses, while decreases respiration at high doses. At high doses, CNR1 signal transduction involves G-protein alpha-i protein activation and subsequent inhibition of mitochondrial soluble adenylate cyclase, decrease in cyclic AMP concentration, inhibition of protein kinase A (PKA)-dependent phosphorylation of specific subunits of the mitochondrial electron transport system, including NDUFS2. In the hypothalamus, inhibits leptin-induced reactive oxygen species (ROS) formation and mediates cannabinoid-induced increase in SREBF1 and FASN gene expression. In response to cannabinoids, drives the release of orexigenic beta-endorphin, but not that of melanocyte-stimulating hormone alpha/alpha-MSH, from hypothalamic POMC neurons, hence promoting food intake. In the hippocampus, regulates cellular respiration and energy production in response to cannabinoids. Involved in cannabinoid-dependent depolarization-induced suppression of inhibition (DSI), a process in which depolarization of CA1 postsynaptic pyramidal neurons mobilizes eCBs, which retrogradely activate presynaptic CB1 receptors, transiently decreasing GABAergic inhibitory neurotransmission. Also reduces excitatory synaptic transmission. In superior cervical ganglions and cerebral vascular smooth muscle cells, inhibits voltage-gated Ca(2+) channels in a constitutive, as well as agonist-dependent manner. Induces leptin production in adipocytes and reduces LRP2-mediated leptin clearance in the kidney, hence participating in hyperleptinemia. In adipose tissue, CNR1 signaling leads to increased expression of SREBF1, ACACA and FASN genes. In the liver, activation by endocannabinoids leads to increased de novo lipogenesis and reduced fatty acid catabolism, associated with increased expression of SREBF1/SREBP-1, GCK, ACACA, ACACB and FASN genes. May also affect de novo cholesterol synthesis and HDL-cholesteryl ether uptake. Peripherally modulates energy metabolism. In high carbohydrate diet-induced obesity, may decrease the expression of mitochondrial dihydrolipoyl dehydrogenase/DLD in striated muscles, as well as that of selected glucose/ pyruvate metabolic enzymes, hence affecting energy expenditure through mitochondrial metabolism. In response to cannabinoid anandamide, elicits a pro-inflammatory response in macrophages, which involves NLRP3 inflammasome activation and IL1B and IL18 secretion. In macrophages infiltrating pancreatic islets, this process may participate in the progression of type-2 diabetes and associated loss of pancreatic beta-cells. This is Cannabinoid receptor 1 (Cnr1) from Rattus norvegicus (Rat).